The primary structure comprises 72 residues: Translational regulator CsrA (72 aa).

This sequence belongs to the CsrA/RsmA family. Homodimer; the beta-strands of each monomer intercalate to form a hydrophobic core, while the alpha-helices form wings that extend away from the core.

The protein localises to the cytoplasm. Its function is as follows. A translational regulator that binds mRNA to regulate translation initiation and/or mRNA stability. Usually binds in the 5'-UTR at or near the Shine-Dalgarno sequence preventing ribosome-binding, thus repressing translation. Its main target seems to be the major flagellin gene, while its function is anatagonized by FliW. The polypeptide is Translational regulator CsrA (Lachnoclostridium phytofermentans (strain ATCC 700394 / DSM 18823 / ISDg) (Clostridium phytofermentans)).